The sequence spans 95 residues: Co-chaperonin GroES (95 aa).

Belongs to the GroES chaperonin family. As to quaternary structure, heptamer of 7 subunits arranged in a ring. Interacts with the chaperonin GroEL.

It is found in the cytoplasm. Functionally, together with the chaperonin GroEL, plays an essential role in assisting protein folding. The GroEL-GroES system forms a nano-cage that allows encapsulation of the non-native substrate proteins and provides a physical environment optimized to promote and accelerate protein folding. GroES binds to the apical surface of the GroEL ring, thereby capping the opening of the GroEL channel. The sequence is that of Co-chaperonin GroES from Desulfatibacillum aliphaticivorans.